The following is a 682-amino-acid chain: Potassium-transporting ATPase ATP-binding subunit (682 aa).

4 consecutive transmembrane segments (helical) span residues 34 to 54, 62 to 82, 219 to 239, and 254 to 274; these read PVMFIVWIGSLLTTCISIAMA, ALFSAAISGWLWVTVLFANFA, IALTILLIALTIVFLLATATL, and VLVALLVCLIPTTIGGLLSAI. Residue D307 is the 4-aspartylphosphate intermediate of the active site. ATP-binding positions include D344, E348, 377 to 384, and K395; that span reads FTAQSRMS. Residues D518 and D522 each coordinate Mg(2+). The next 3 membrane-spanning stretches (helical) occupy residues 588–608, 616–636, and 656–676; these read FAIIPAAFAATYPQLNALNIM, AILSAVIFNALIIVFLIPLAL, and IYGLGGLLVPFIGIKVIDLLL.

This sequence belongs to the cation transport ATPase (P-type) (TC 3.A.3) family. Type IA subfamily. As to quaternary structure, the system is composed of three essential subunits: KdpA, KdpB and KdpC.

The protein localises to the cell inner membrane. The enzyme catalyses K(+)(out) + ATP + H2O = K(+)(in) + ADP + phosphate + H(+). Functionally, part of the high-affinity ATP-driven potassium transport (or Kdp) system, which catalyzes the hydrolysis of ATP coupled with the electrogenic transport of potassium into the cytoplasm. This subunit is responsible for energy coupling to the transport system and for the release of the potassium ions to the cytoplasm. In Escherichia coli O6:K15:H31 (strain 536 / UPEC), this protein is Potassium-transporting ATPase ATP-binding subunit.